A 314-amino-acid polypeptide reads, in one-letter code: Dual specificity protein phosphatase 2 (314 aa).

Positions 23-144 (EAERTLLLDC…FQGCCPDLCS (122 aa)) constitute a Rhodanese domain. A Tyrosine-protein phosphatase domain is found at 172 to 313 (GPVEILPYLF…LLQFETQVLC (142 aa)). The active-site Phosphocysteine intermediate is the Cys257.

This sequence belongs to the protein-tyrosine phosphatase family. Non-receptor class dual specificity subfamily. In terms of assembly, interacts with MAPK14; this interaction does not lead to catalytic activation of DUSP2 and dephosphrylation of MAPK14. In terms of tissue distribution, expressed in hematopoietic tissues.

The protein localises to the nucleus. The catalysed reaction is O-phospho-L-tyrosyl-[protein] + H2O = L-tyrosyl-[protein] + phosphate. It catalyses the reaction O-phospho-L-threonyl-[protein] + H2O = L-threonyl-[protein] + phosphate. Dephosphorylates both phosphorylated Thr and Tyr residues in MAPK1, and dephosphorylation of phosphotyrosine is slightly faster than that of phosphothreonine. Can dephosphorylate MAPK1. This Homo sapiens (Human) protein is Dual specificity protein phosphatase 2.